A 72-amino-acid polypeptide reads, in one-letter code: Translation initiation factor IF-1 (72 aa).

The 72-residue stretch at 1-72 folds into the S1-like domain; sequence MSKEEVLEFS…TKGRITYRYK (72 aa).

It belongs to the IF-1 family. As to quaternary structure, component of the 30S ribosomal translation pre-initiation complex which assembles on the 30S ribosome in the order IF-2 and IF-3, IF-1 and N-formylmethionyl-tRNA(fMet); mRNA recruitment can occur at any time during PIC assembly.

It localises to the cytoplasm. One of the essential components for the initiation of protein synthesis. Stabilizes the binding of IF-2 and IF-3 on the 30S subunit to which N-formylmethionyl-tRNA(fMet) subsequently binds. Helps modulate mRNA selection, yielding the 30S pre-initiation complex (PIC). Upon addition of the 50S ribosomal subunit IF-1, IF-2 and IF-3 are released leaving the mature 70S translation initiation complex. The sequence is that of Translation initiation factor IF-1 from Bartonella tribocorum (strain CIP 105476 / IBS 506).